Reading from the N-terminus, the 261-residue chain is Small ribosomal subunit protein mS23 (261 aa).

Residues 228 to 261 (EQRAAAFTGAPEIPSTEDSLGLEEGVEEKQPQQA) form a disordered region.

The protein belongs to the mitochondrion-specific ribosomal protein mS23 family. As to quaternary structure, component of the mitochondrial small ribosomal subunit.

The protein localises to the mitochondrion. The protein is Small ribosomal subunit protein mS23 (rsm25) of Aspergillus oryzae (strain ATCC 42149 / RIB 40) (Yellow koji mold).